We begin with the raw amino-acid sequence, 495 residues long: Probable aspartic-type endopeptidase OPSB (495 aa).

The N-terminal stretch at Met-1–Thr-19 is a signal peptide. The 336-residue stretch at Tyr-73–Ala-408 folds into the Peptidase A1 domain. Asn-76 is a glycosylation site (N-linked (GlcNAc...) asparagine). Asp-91 is an active-site residue. Residue Asn-136 is glycosylated (N-linked (GlcNAc...) asparagine). The active site involves Asp-290. N-linked (GlcNAc...) asparagine glycosylation is present at Asn-413. Residues Thr-448–Gln-470 form a disordered region. Ala-467 carries GPI-anchor amidated alanine lipidation. Positions Ala-468–Met-495 are cleaved as a propeptide — removed in mature form.

The protein belongs to the peptidase A1 family.

It is found in the cell membrane. Probable GPI-anchored aspartic-type endopeptidase which contributes to virulence. The polypeptide is Probable aspartic-type endopeptidase OPSB (OPSB) (Trichophyton verrucosum (strain HKI 0517)).